The following is a 297-amino-acid chain: UBX domain-containing protein 1 (297 aa).

At Ala2 the chain carries N-acetylalanine. The UBA domain maps to 2-42 (AELTALESLIEMGFPRGRAEKALALTGNQGIEAAMDWLMEH). The interval 38–214 (WLMEHEDDPD…PPTKREYDQC (177 aa)) is disordered. Residues 42–52 (HEDDPDVDEPL) are compositionally biased toward acidic residues. The interval 43–297 (EDDPDVDEPL…VLIVAKKCPS (255 aa)) is interaction with BRCA1. 2 stretches are compositionally biased toward basic and acidic residues: residues 86-122 (LTEE…EREK) and 137-177 (KLQE…ERAK). Ser199 carries the post-translational modification Phosphoserine. Ser200 is modified (phosphoserine; by MAPK12). A phosphothreonine mark is found at Thr207 and Thr229. Positions 209-291 (REYDQCRIQV…GLVPSAVLIV (83 aa)) constitute a UBX domain. Ser270 is modified (phosphoserine).

Interacts with MAVS; this interaction prevents MAVS oligomerization and thus disrupts the RLR signaling pathway. Interacts with CUL1; this interaction inhibits CUL1-mediated degradation of NF-kappa-B inhibitors. Interacts with BIRC2/c-IAP1; this interaction prevents TNFalpha-stimulated RIP1 ubiquitination and subsequent NF-kappa-B activation. Component of a complex required to couple retrotranslocation, ubiquitination and deglycosylation composed of NGLY1, SAKS1, AMFR, VCP and RAD23B. Interacts with HOMER2. Interacts directly with VCP. Interacts with BRCA1 and BARD1; interaction takes place when BRCA1 is not autoubiquitinated but is strongly enhanced in the presence of autoubiquitinated BRCA1.

The protein localises to the cytoplasm. Ubiquitin-binding protein that plays a role in the modulation of innate immune response. Blocks both the RIG-I-like receptors (RLR) and NF-kappa-B pathways. Following viral infection, UBXN1 is induced and recruited to the RLR component MAVS. In turn, interferes with MAVS oligomerization, and disrupts the MAVS/TRAF3/TRAF6 signalosome. This function probably serves as a brake to prevent excessive RLR signaling. Interferes with the TNFalpha-triggered NF-kappa-B pathway by interacting with cellular inhibitors of apoptosis proteins (cIAPs) and thereby inhibiting their recruitment to TNFR1. Also prevents the activation of NF-kappa-B by associating with CUL1 and thus inhibiting NF-kappa-B inhibitor alpha/NFKBIA degradation that remains bound to NF-kappa-B. Interacts with the BRCA1-BARD1 heterodimer and regulates its activity. Specifically binds 'Lys-6'-linked polyubiquitin chains. Interaction with autoubiquitinated BRCA1 leads to the inhibition of the E3 ubiquitin-protein ligase activity of the BRCA1-BARD1 heterodimer. Component of a complex required to couple deglycosylation and proteasome-mediated degradation of misfolded proteins in the endoplasmic reticulum that are retrotranslocated in the cytosol. This chain is UBX domain-containing protein 1 (Ubxn1), found in Mus musculus (Mouse).